Reading from the N-terminus, the 136-residue chain is Large-conductance mechanosensitive channel (136 aa).

The next 4 membrane-spanning stretches (helical) occupy residues 9–29, 32–52, 54–74, and 79–99; these read AFAS…GAAF, IVSS…LGGV, FSDL…VVIA, and IQTV…LKAI.

Belongs to the MscL family. As to quaternary structure, homopentamer.

The protein localises to the cell inner membrane. In terms of biological role, channel that opens in response to stretch forces in the membrane lipid bilayer. May participate in the regulation of osmotic pressure changes within the cell. In Shewanella oneidensis (strain ATCC 700550 / JCM 31522 / CIP 106686 / LMG 19005 / NCIMB 14063 / MR-1), this protein is Large-conductance mechanosensitive channel.